The following is a 479-amino-acid chain: Protein TRIGALACTOSYLDIACYLGLYCEROL 4, chloroplastic (479 aa).

Residues valine 288–glycine 310 are membrane-embedded.

Homodimer. Forms dimeric beta-barrel. Interacts with TGD5.

It localises to the plastid. The protein localises to the chloroplast outer membrane. It is found in the endoplasmic reticulum. Functionally, involved in lipid transfer from the endoplasmic reticulum (ER) to plastids. Specifically binds phosphatidic acid (PtdOH). This Arabidopsis thaliana (Mouse-ear cress) protein is Protein TRIGALACTOSYLDIACYLGLYCEROL 4, chloroplastic.